The sequence spans 619 residues: Chaperone protein HscA homolog (619 aa).

The protein belongs to the heat shock protein 70 family.

Its function is as follows. Chaperone involved in the maturation of iron-sulfur cluster-containing proteins. Has a low intrinsic ATPase activity which is markedly stimulated by HscB. The sequence is that of Chaperone protein HscA homolog from Haemophilus influenzae (strain PittGG).